The sequence spans 398 residues: Serpin-ZX (398 aa).

The tract at residues 342-366 (GTEAAARTARVVTLRSLPVEPVKVD) is RCL.

Belongs to the serpin family. Expressed in roots, coleoptiles, shoots, leaves, embryo and endosperm.

Its function is as follows. Inhibits chymotrypsin, cathepsin G and trypsin in vitro. The polypeptide is Serpin-ZX (PAZX) (Hordeum vulgare (Barley)).